A 379-amino-acid polypeptide reads, in one-letter code: MAAVTYELIKTCKQSGARLGKLHTPHGTIETPIFMPVGTLATVKTMSPEELKQLGAQIILSNTYHLWLRPGHDIVKEAGGLHEFMNWDRPILTDSGGFQVFSLSDLRTIEEEGVHFRNHLSGEKLFLSPEGAMEIQNALGSDIMMAFDECPPYPAERDYMRPSVERTSRWAERCLKAHKRPEDQALFGIIQGGEYEDLRRQSAQDITSLDFPGYAIGGVSVGEPKDVMNRVLEFTTPLLPANKPRYLMGVGSPDSLIDGAIRGIDMFDCVLPTRIARNGTCMTSNGRLVVRNAKYARDFRSLDENCDCHVCQTYTRAYIRHLVKCDETFGFRLTTYHNLYFLLKLMKDVRQAILDDRLLDFREEFFEQYGFNQPNAKNF.

Asp-94 (proton acceptor) is an active-site residue. Residues 94 to 98, Asp-148, Gln-191, and Gly-218 each bind substrate; that span reads DSGGF. An RNA binding region spans residues 249–255; sequence GVGSPDS. The active-site Nucleophile is the Asp-268. The tract at residues 273–277 is RNA binding; important for wobble base 34 recognition; that stretch reads TRIAR. Cys-306, Cys-308, Cys-311, and His-337 together coordinate Zn(2+).

This sequence belongs to the queuine tRNA-ribosyltransferase family. Homodimer. Within each dimer, one monomer is responsible for RNA recognition and catalysis, while the other monomer binds to the replacement base PreQ1. Zn(2+) is required as a cofactor.

It catalyses the reaction 7-aminomethyl-7-carbaguanine + guanosine(34) in tRNA = 7-aminomethyl-7-carbaguanosine(34) in tRNA + guanine. It participates in tRNA modification; tRNA-queuosine biosynthesis. Catalyzes the base-exchange of a guanine (G) residue with the queuine precursor 7-aminomethyl-7-deazaguanine (PreQ1) at position 34 (anticodon wobble position) in tRNAs with GU(N) anticodons (tRNA-Asp, -Asn, -His and -Tyr). Catalysis occurs through a double-displacement mechanism. The nucleophile active site attacks the C1' of nucleotide 34 to detach the guanine base from the RNA, forming a covalent enzyme-RNA intermediate. The proton acceptor active site deprotonates the incoming PreQ1, allowing a nucleophilic attack on the C1' of the ribose to form the product. After dissociation, two additional enzymatic reactions on the tRNA convert PreQ1 to queuine (Q), resulting in the hypermodified nucleoside queuosine (7-(((4,5-cis-dihydroxy-2-cyclopenten-1-yl)amino)methyl)-7-deazaguanosine). The protein is Queuine tRNA-ribosyltransferase of Halalkalibacterium halodurans (strain ATCC BAA-125 / DSM 18197 / FERM 7344 / JCM 9153 / C-125) (Bacillus halodurans).